Reading from the N-terminus, the 43-residue chain is Protein PsbN (43 aa).

Residues 7–27 (LIVAIAAVTICITAFAIYTAF) form a helical membrane-spanning segment.

It belongs to the PsbN family.

The protein localises to the cellular thylakoid membrane. Its function is as follows. May play a role in photosystem I and II biogenesis. The sequence is that of Protein PsbN from Synechococcus sp. (strain JA-2-3B'a(2-13)) (Cyanobacteria bacterium Yellowstone B-Prime).